Consider the following 319-residue polypeptide: NADH-cytochrome b5 reductase 2 (319 aa).

Residues 30-46 (LAPVYLTVGLAGLGVGL) form a helical membrane-spanning segment. An FAD-binding FR-type domain is found at 69 to 173 (QGWVDLKLSE…KGPLPKYPWE (105 aa)). 176-211 (KHQHICLIAGGTGITPMYQLARHIFKNPEDKTKVTL) contacts FAD.

It belongs to the flavoprotein pyridine nucleotide cytochrome reductase family. The cofactor is FAD.

The protein localises to the mitochondrion outer membrane. It carries out the reaction 2 Fe(III)-[cytochrome b5] + NADH = 2 Fe(II)-[cytochrome b5] + NAD(+) + H(+). Functionally, may mediate the reduction of outer membrane cytochrome b5. In Aspergillus terreus (strain NIH 2624 / FGSC A1156), this protein is NADH-cytochrome b5 reductase 2 (mcr1).